The primary structure comprises 855 residues: DNA mismatch repair protein MutS (855 aa).

621 to 628 (GPNMGGKS) is an ATP binding site.

Belongs to the DNA mismatch repair MutS family.

Its function is as follows. This protein is involved in the repair of mismatches in DNA. It is possible that it carries out the mismatch recognition step. This protein has a weak ATPase activity. In Francisella tularensis subsp. holarctica (strain OSU18), this protein is DNA mismatch repair protein MutS.